We begin with the raw amino-acid sequence, 378 residues long: Mannitol-1-phosphate 5-dehydrogenase (378 aa).

4-15 provides a ligand contact to NAD(+); sequence SVHFGAGNIGRG.

It belongs to the mannitol dehydrogenase family.

The catalysed reaction is D-mannitol 1-phosphate + NAD(+) = beta-D-fructose 6-phosphate + NADH + H(+). This is Mannitol-1-phosphate 5-dehydrogenase from Streptococcus pneumoniae (strain JJA).